Reading from the N-terminus, the 223-residue chain is Octanoyltransferase (223 aa).

The 180-residue stretch at 35–214 folds into the BPL/LPL catalytic domain; sequence GEARELIWLL…HFPAMLAGLR (180 aa). Substrate-binding positions include 74–81, 145–147, and 158–160; these read RGGRYTYH, AIG, and GFS. Cys-176 functions as the Acyl-thioester intermediate in the catalytic mechanism.

It belongs to the LipB family.

It localises to the cytoplasm. The enzyme catalyses octanoyl-[ACP] + L-lysyl-[protein] = N(6)-octanoyl-L-lysyl-[protein] + holo-[ACP] + H(+). It participates in protein modification; protein lipoylation via endogenous pathway; protein N(6)-(lipoyl)lysine from octanoyl-[acyl-carrier-protein]: step 1/2. In terms of biological role, catalyzes the transfer of endogenously produced octanoic acid from octanoyl-acyl-carrier-protein onto the lipoyl domains of lipoate-dependent enzymes. Lipoyl-ACP can also act as a substrate although octanoyl-ACP is likely to be the physiological substrate. In Rhizorhabdus wittichii (strain DSM 6014 / CCUG 31198 / JCM 15750 / NBRC 105917 / EY 4224 / RW1) (Sphingomonas wittichii), this protein is Octanoyltransferase.